The sequence spans 115 residues: Large ribosomal subunit protein bL19 (115 aa).

This sequence belongs to the bacterial ribosomal protein bL19 family.

Its function is as follows. This protein is located at the 30S-50S ribosomal subunit interface and may play a role in the structure and function of the aminoacyl-tRNA binding site. This chain is Large ribosomal subunit protein bL19, found in Tolumonas auensis (strain DSM 9187 / NBRC 110442 / TA 4).